The following is a 252-amino-acid chain: 5'-nucleotidase SurE (252 aa).

Residues D8, D9, S42, and N94 each contribute to the a divalent metal cation site.

It belongs to the SurE nucleotidase family. It depends on a divalent metal cation as a cofactor.

The protein localises to the cytoplasm. It catalyses the reaction a ribonucleoside 5'-phosphate + H2O = a ribonucleoside + phosphate. Nucleotidase that shows phosphatase activity on nucleoside 5'-monophosphates. This Ehrlichia ruminantium (strain Gardel) protein is 5'-nucleotidase SurE.